We begin with the raw amino-acid sequence, 893 residues long: MFPLKDAEMGAFTFFASALPHDVCGSNGLPLTPNSIKILGRFQILKTITHPRLCQYVDISRGKHERLVVVAEHCERSLEDLLRERKPVSHSTVLCIAYEVLEGLHYLNKHGIVHRALSPHNILLDRKGHIKLAKFGLYHMTAHGDDVDFPIGYPSYLAPEVIAQGIPKTTDHVPSEKPLPSGPKSDVWSLGIILFELCVGRKLFQSLDVSERVKFLLTLGCVDDTIIVLAEEHGCLDIIKELPENVINILKKCLTFHPSKRPTPDELMKDQVFSEVSPLYTPFIKPASLFSSSLRCADLTLPEDISDLCKDIDNDYLAERSIEEVYYLWCLAGGDLEKELINKEIIRSKPPVCTLPNFLFEDGESFGQGRDRSSLLDDTTVTLSLCQLRNRLKDVGGEAFYPLLEDDQSNLPHSNSNNELSAAATLPLIIRERDTEYQLNRIILFDRLLKAYPYKKNQIWKEARVDIPPLMRGLTWAALLGVEGAIHAKYDAIDKDTPIPTDRQIEVDIPRCHQYDELLSSPEGHAKFRRVLKAWVVSHPDLVYWQGLDSLCAPFLYLNFNNEALAYACMSAFIPKYLYNFFLKDNSHVIQEYLTVFSQMIAFHDPELSNHLNEIGFIPDLYAIPWFLTMFTHVFPLHKIFHLWDTLLLGNSSFPFCIGVAILQQLRDRLLANGFNECILLFSDLPEIDIERCVRESVNLFCWTPKSATYRQHAQPPKPASESSVVRSSAPYFSAECTDPPKTDLSRESIPLSDLKSEVSPRISAEDLIDLCELTVTGHFKTPTKKTKSSKPKLLVVDIRNSEDFVRGHIAGSINIPFSAAFTAEGELSQGPYTTMLHNFKGKVIVVVGHVAKQTAEFAAHLVKMKYPRVCILDGGINKIRPTGLLTVPSPQI.

One can recognise a Protein kinase domain in the interval 1–273 (MFPLKDAEMG…PDELMKDQVF (273 aa)). In terms of domain architecture, Rab-GAP TBC spans 466-651 (DIPPLMRGLT…HLWDTLLLGN (186 aa)).

The protein belongs to the protein kinase superfamily. As to quaternary structure, component of the FERRY complex composed of five subunits, TBCK, PPP1R21, FERRY3, CRYZL1 and GATD1 with a ratio of 1:2:1:2:4, respectively.

It localises to the cytoplasm. The protein resides in the cytoskeleton. The protein localises to the spindle. Its subcellular location is the midbody. It is found in the early endosome. Component of the FERRY complex (Five-subunit Endosomal Rab5 and RNA/ribosome intermediary). The FERRY complex directly interacts with mRNAs and RAB5A, and functions as a RAB5A effector involved in the localization and the distribution of specific mRNAs most likely by mediating their endosomal transport. The complex recruits mRNAs and ribosomes to early endosomes through direct mRNA-interaction. Also involved in the modulation of mTOR signaling and expression of mTOR complex components. Involved in the control of actin-cytoskeleton organization. The polypeptide is TBC domain-containing protein kinase-like protein (Tbck) (Mus musculus (Mouse)).